Reading from the N-terminus, the 368-residue chain is SH3 domain-containing protein 2 (368 aa).

Coiled-coil stretches lie at residues 1–21 (MDAIRKQASRLREQVARQQQA) and 146–210 (LEDA…LGKE). The 264-residue stretch at 1 to 264 (MDAIRKQASR…MVSERQRIEA (264 aa)) folds into the BAR domain. The disordered stretch occupies residues 258 to 281 (ERQRIEAPSTPSSADSMPPPPSYE). Residues 299 to 358 (MGYFLGEVLFPYHGVTDVELSLSTGEYVVVRKVTGSGWAEGECKGKAGWFPYGYIERRER) form the SH3 domain.

Homodimer. Interacts with FREE1. Interacts (via SH3 domain) with ATG8E and ATG8F. Component of a phosphoinositide 3-kinase (PI3K) complex containing ATG6, SH3P2 and FREE1. Binds to SH3P3 and DRP1A. Forms a complex made of SH3P2 and DRP1A and triggers its accumulation at the cell plate. In terms of tissue distribution, highly expressed in seedlings. Detected in flowers, leaves and stems.

The protein resides in the cytoplasm. It is found in the cytoplasmic vesicle. Its subcellular location is the clathrin-coated vesicle. It localises to the cell membrane. The protein localises to the late endosome. The protein resides in the autophagosome membrane. In terms of biological role, regulator for autophaosome formation and/or maturation. Binds phosphatidylinositol-phosphate; highest affinity for vesicles containing PtdIns(3,4,5)P(3), followed by those containing PtdIns(4,5)P(2) and PtdIns(3,4)P(2), with minimal binding to phosphatidylinositol monophosphates, including PtdIns(3)P. Together with DRP1A, converts the fused vesicles to tubular structures at the cell plate during cytokinesis. This chain is SH3 domain-containing protein 2, found in Arabidopsis thaliana (Mouse-ear cress).